Here is a 967-residue protein sequence, read N- to C-terminus: Disks large homolog 1 (967 aa).

The region spanning Ser-5–Arg-65 is the L27 domain. Positions Asn-202–Lys-289 constitute a PDZ 1 domain. Residues Ile-324 to Gln-351 are disordered. The span at Pro-330–Val-339 shows a compositional bias: pro residues. PDZ domains lie at Val-361–Thr-448 and Pro-510–Pro-591. An SH3 domain is found at Arg-619–Glu-690. Residues Glu-673–Ser-723 form a disordered region. Positions Ser-682 to Gln-696 are enriched in basic residues. Residues Val-697–Leu-715 are compositionally biased toward polar residues. The region spanning Val-769–Ser-955 is the Guanylate kinase-like domain.

This sequence belongs to the MAGUK family. As to quaternary structure, homooligomerizes; requires L27 domain. Interacts (via L27 domain) with ajm-1; the interaction regulates ajm-1 apical junction location. Expressed in the apical junctions in the hypodermis. Expressed in epithelial cells in the reproductive system including vulva, uterus and spermatheca.

It localises to the membrane. It is found in the apical cell membrane. Its subcellular location is the cell junction. The protein resides in the adherens junction. The protein localises to the lateral cell membrane. It localises to the cytoplasm. In terms of biological role, essential multidomain scaffolding protein required for normal development. Recruits channels, receptors and signaling molecules to discrete plasma membrane domains in polarized cells. Required for proper embryonic elongation. Acts upstream of ajm-1 and becomes localized to apical junctions independently of ajm-1. With let-413, cooperatively regulates ajm-1 localization to apical junctions and the establishment of newly formed epithelia. Plays a role in assembling the adherens junction by clustering ajm-1 and other proteins, to form electron-dense structures; may form a compartment distinct to that of hmp-1 and associated proteins. Plays a role in the directed outgrowth of seam cells, towards neighboring seam cells, during larval development. The polypeptide is Disks large homolog 1 (Caenorhabditis elegans).